The following is a 609-amino-acid chain: Glutamine--fructose-6-phosphate aminotransferase [isomerizing] (609 aa).

Catalysis depends on C2, which acts as the Nucleophile; for GATase activity. Positions 2–219 (CGIVAAVTQR…EGDIAIVARK (218 aa)) constitute a Glutamine amidotransferase type-2 domain. SIS domains follow at residues 288 to 428 (ENNI…SKKE) and 460 to 599 (MANT…IDQP). The active-site For Fru-6P isomerization activity is the K604.

In terms of assembly, homodimer.

The protein resides in the cytoplasm. The catalysed reaction is D-fructose 6-phosphate + L-glutamine = D-glucosamine 6-phosphate + L-glutamate. Its function is as follows. Catalyzes the first step in hexosamine metabolism, converting fructose-6P into glucosamine-6P using glutamine as a nitrogen source. This Buchnera aphidicola subsp. Acyrthosiphon pisum (strain APS) (Acyrthosiphon pisum symbiotic bacterium) protein is Glutamine--fructose-6-phosphate aminotransferase [isomerizing].